The chain runs to 238 residues: MSRSTMLAHSAIPSSLIRMDLLSPWILTATAPKFLRLFAPATRRRSARSTIPSWSRSSSGKQAHHAWLSSITPCDGARSPWLARIPMAASSLQAQSPLGARRRVYQHLPEEADRLLKGRAQIVNVWRPLRGPVQDWPLAVMDCSTLAQAHIHPTKLYRNRFELRGETVSISHDESQRWYYLDGQQTDECTLIKIWDSKEGISGHMCAHCAFQHPNTPVDAPLRESVEVRCLVFYENQE.

The protein belongs to the asaB hydroxylase/desaturase family.

The protein operates within mycotoxin biosynthesis. Functionally, part of the gene cluster that mediates the biosynthesis of aspirochlorine (or antibiotic A30641), an unusual halogenated spiro compound with distinctive antifungal properties due to selective inhibition of protein biosynthesis, and which is also active against bacteria, viruses, and murine tumor cells. The non-ribosomal peptide synthetase (NRPS) aclP is responsible the formation of the diketopiperazine (DKP) core from the condensation of 2 phenylalanine residues. One Phe residue is tailored into chlorotyrosine by hydroxylation and chlorination, whereas the second Phe undergoes an unprecedented C-C bond cleavage to be converted into glycine. After formation of the DKP, sulfur is incorporated into the DKP by conjugation with glutathione by aclG, followed by its stepwise degradation to the thiol by aclI, aclJ and aclK, and the dithiol oxidation by aclT. In addition, oxygenases (aclB, aclC, aclL and aclO) and O-methyltransferases (aclM and aclU) act as tailoring enzymes to produce the intermediate dechloroaspirochlorine. Ultimately, chlorination of dechloroaspirochlorine by the halogenase aclH is the last step in the aspirochlorine pathway. In Aspergillus oryzae (strain ATCC 42149 / RIB 40) (Yellow koji mold), this protein is Aspirochlorine biosynthesis protein N.